We begin with the raw amino-acid sequence, 512 residues long: Kynurenine 3-monooxygenase (512 aa).

This sequence belongs to the aromatic-ring hydroxylase family. KMO subfamily. Requires FAD as cofactor.

Its subcellular location is the mitochondrion outer membrane. It catalyses the reaction L-kynurenine + NADPH + O2 + H(+) = 3-hydroxy-L-kynurenine + NADP(+) + H2O. It functions in the pathway cofactor biosynthesis; NAD(+) biosynthesis; quinolinate from L-kynurenine: step 1/3. In terms of biological role, catalyzes the hydroxylation of L-kynurenine (L-Kyn) to form 3-hydroxy-L-kynurenine (L-3OHKyn). Required for synthesis of quinolinic acid. The protein is Kynurenine 3-monooxygenase (bna4) of Neosartorya fischeri (strain ATCC 1020 / DSM 3700 / CBS 544.65 / FGSC A1164 / JCM 1740 / NRRL 181 / WB 181) (Aspergillus fischerianus).